We begin with the raw amino-acid sequence, 955 residues long: Centrosomal protein of 112 kDa (955 aa).

Residues Gln277–Arg954 are a coiled coil.

It is found in the cytoplasm. The protein localises to the cytoskeleton. Its subcellular location is the microtubule organizing center. The protein resides in the centrosome. The chain is Centrosomal protein of 112 kDa (CEP112) from Homo sapiens (Human).